The primary structure comprises 74 residues: Translation initiation factor IF-1 (74 aa).

Residues 1–72 (MGKEDVIRME…TRGRIVYRKK (72 aa)) enclose the S1-like domain.

Belongs to the IF-1 family. In terms of assembly, component of the 30S ribosomal translation pre-initiation complex which assembles on the 30S ribosome in the order IF-2 and IF-3, IF-1 and N-formylmethionyl-tRNA(fMet); mRNA recruitment can occur at any time during PIC assembly.

The protein localises to the cytoplasm. One of the essential components for the initiation of protein synthesis. Stabilizes the binding of IF-2 and IF-3 on the 30S subunit to which N-formylmethionyl-tRNA(fMet) subsequently binds. Helps modulate mRNA selection, yielding the 30S pre-initiation complex (PIC). Upon addition of the 50S ribosomal subunit IF-1, IF-2 and IF-3 are released leaving the mature 70S translation initiation complex. The protein is Translation initiation factor IF-1 of Thermotoga petrophila (strain ATCC BAA-488 / DSM 13995 / JCM 10881 / RKU-1).